We begin with the raw amino-acid sequence, 499 residues long: Probable alpha-L-arabinofuranosidase B (499 aa).

The signal sequence occupies residues 1 to 17 (MFSRRNLLALGLAATVS). Positions 18–335 (AGPCDIYEAG…ENIVAAKYVV (318 aa)) are catalytic. Cystine bridges form between cysteine 21/cysteine 31, cysteine 81/cysteine 86, and cysteine 176/cysteine 177. Residue asparagine 83 is glycosylated (N-linked (GlcNAc...) asparagine). The N-linked (GlcNAc...) asparagine glycan is linked to asparagine 202. Aspartate 219 provides a ligand contact to substrate. Catalysis depends on glutamate 221, which acts as the Nucleophile. Positions 222, 223, 296, 416, 418, 419, 435, 463, 465, 468, and 488 each coordinate substrate. The segment at 336-499 (GSLVSGPSFT…SFEIETAFAS (164 aa)) is ABD. The cysteines at positions 401 and 439 are disulfide-linked.

The protein belongs to the glycosyl hydrolase 54 family.

It is found in the secreted. It carries out the reaction Hydrolysis of terminal non-reducing alpha-L-arabinofuranoside residues in alpha-L-arabinosides.. It functions in the pathway glycan metabolism; L-arabinan degradation. Its function is as follows. Alpha-L-arabinofuranosidase involved in the degradation of arabinoxylan, a major component of plant hemicellulose. Able to hydrolyze 1,5-, 1,3- and 1,2-alpha-linkages not only in L-arabinofuranosyl oligosaccharides, but also in polysaccharides containing terminal non-reducing L-arabinofuranoses in side chains, like L-arabinan, arabinogalactan and arabinoxylan. The protein is Probable alpha-L-arabinofuranosidase B (abfB) of Aspergillus awamori (Black koji mold).